Consider the following 418-residue polypeptide: Alpha-1-antitrypsin (418 aa).

The N-terminal stretch at M1–A24 is a signal peptide. S38 is modified (phosphoserine). N-linked (GlcNAc...) asparagine glycosylation is found at N70, N107, and N271. The tract at residues G373 to K392 is RCL. S383 carries the post-translational modification Phosphoserine.

Belongs to the serpin family. In terms of assembly, interacts with CELA2A. Interacts with ERGIC3 and LMAN1/ERGIC53. Interacts with PRSS1/Trypsin. Plasma.

The protein resides in the secreted. Its function is as follows. Inhibitor of serine proteases. Its primary target is elastase, but it also has a moderate affinity for plasmin and thrombin. Inhibits trypsin, chymotrypsin and plasminogen activator. The sequence is that of Alpha-1-antitrypsin (SERPINA1) from Pongo abelii (Sumatran orangutan).